The chain runs to 640 residues: 1,4-alpha-glucan branching enzyme GlgB (640 aa).

The active-site Nucleophile is the aspartate 318. The active-site Proton donor is the glutamate 371.

Belongs to the glycosyl hydrolase 13 family. GlgB subfamily. In terms of assembly, monomer.

It carries out the reaction Transfers a segment of a (1-&gt;4)-alpha-D-glucan chain to a primary hydroxy group in a similar glucan chain.. It functions in the pathway glycan biosynthesis; glycogen biosynthesis. Its function is as follows. Catalyzes the formation of the alpha-1,6-glucosidic linkages in glycogen by scission of a 1,4-alpha-linked oligosaccharide from growing alpha-1,4-glucan chains and the subsequent attachment of the oligosaccharide to the alpha-1,6 position. The sequence is that of 1,4-alpha-glucan branching enzyme GlgB from Francisella tularensis subsp. mediasiatica (strain FSC147).